The sequence spans 150 residues: UPF0178 protein HCH_06960 (150 aa).

This sequence belongs to the UPF0178 family.

This is UPF0178 protein HCH_06960 from Hahella chejuensis (strain KCTC 2396).